A 206-amino-acid polypeptide reads, in one-letter code: Holliday junction branch migration complex subunit RuvA (206 aa).

The interval 1 to 64 (MIGKLKGTLD…EDMLRLYGFQ (64 aa)) is domain I. The domain II stretch occupies residues 65 to 144 (SALEREWFRL…AYAGAASGTI (80 aa)). Residues 145 to 154 (GLKQELGEGV) form a flexible linker region. Residues 154 to 206 (VAPAPITDAVSALVNLGYSRDTAANAVAAALKTAGEDADASKLIRFGLKELAR) are domain III.

The protein belongs to the RuvA family. As to quaternary structure, homotetramer. Forms an RuvA(8)-RuvB(12)-Holliday junction (HJ) complex. HJ DNA is sandwiched between 2 RuvA tetramers; dsDNA enters through RuvA and exits via RuvB. An RuvB hexamer assembles on each DNA strand where it exits the tetramer. Each RuvB hexamer is contacted by two RuvA subunits (via domain III) on 2 adjacent RuvB subunits; this complex drives branch migration. In the full resolvosome a probable DNA-RuvA(4)-RuvB(12)-RuvC(2) complex forms which resolves the HJ.

The protein localises to the cytoplasm. Functionally, the RuvA-RuvB-RuvC complex processes Holliday junction (HJ) DNA during genetic recombination and DNA repair, while the RuvA-RuvB complex plays an important role in the rescue of blocked DNA replication forks via replication fork reversal (RFR). RuvA specifically binds to HJ cruciform DNA, conferring on it an open structure. The RuvB hexamer acts as an ATP-dependent pump, pulling dsDNA into and through the RuvAB complex. HJ branch migration allows RuvC to scan DNA until it finds its consensus sequence, where it cleaves and resolves the cruciform DNA. This is Holliday junction branch migration complex subunit RuvA from Mesorhizobium japonicum (strain LMG 29417 / CECT 9101 / MAFF 303099) (Mesorhizobium loti (strain MAFF 303099)).